We begin with the raw amino-acid sequence, 106 residues long: Iron-sulfur cluster assembly protein CyaY (106 aa).

This sequence belongs to the frataxin family.

Involved in iron-sulfur (Fe-S) cluster assembly. May act as a regulator of Fe-S biogenesis. This chain is Iron-sulfur cluster assembly protein CyaY, found in Cronobacter sakazakii (strain ATCC BAA-894) (Enterobacter sakazakii).